Reading from the N-terminus, the 166-residue chain is Large ribosomal subunit protein uL10 (166 aa).

Belongs to the universal ribosomal protein uL10 family. As to quaternary structure, part of the ribosomal stalk of the 50S ribosomal subunit. The N-terminus interacts with L11 and the large rRNA to form the base of the stalk. The C-terminus forms an elongated spine to which L12 dimers bind in a sequential fashion forming a multimeric L10(L12)X complex.

In terms of biological role, forms part of the ribosomal stalk, playing a central role in the interaction of the ribosome with GTP-bound translation factors. This Streptococcus pyogenes serotype M18 (strain MGAS8232) protein is Large ribosomal subunit protein uL10 (rplJ).